The chain runs to 542 residues: Putative sodium-dependent excitatory amino acid transporter glt-6 (542 aa).

At 1–15 (MKSKRRDDIVQFCRE) the chain is on the cytoplasmic side. A run of 3 helical transmembrane segments spans residues 16–36 (NTLL…GFGL), 55–75 (IFMQ…LISA), and 93–113 (LYYL…VTVI). Residues 114-191 (HPGDPSIKGT…IVKRSIGMTK (78 aa)) are Extracellular-facing. N-linked (GlcNAc...) asparagine glycosylation is present at N175. Transmembrane regions (helical) follow at residues 192 to 212 (GMNI…ISQL), 234 to 254 (VVTL…GNLL), 265 to 285 (VLAL…IITV), 303 to 323 (GMIQ…TLPM), and 386 to 406 (TIAS…LLIL). The span at 505 to 517 (RIGSRIGSRRPSS) shows a compositional bias: low complexity. The segment at 505-542 (RIGSRIGSRRPSSTNLHLSWRNNNIEPPYTPLPNDENV) is disordered. Over residues 518 to 529 (TNLHLSWRNNNI) the composition is skewed to polar residues.

The protein belongs to the dicarboxylate/amino acid:cation symporter (DAACS) (TC 2.A.23) family.

The protein localises to the membrane. The polypeptide is Putative sodium-dependent excitatory amino acid transporter glt-6 (glt-6) (Caenorhabditis elegans).